The following is a 548-amino-acid chain: Kinetochore and Eb1-associated basic protein (548 aa).

2 disordered regions span residues 1 to 51 and 82 to 181; these read MSSM…PKHP and YRSS…IRPK. 3 stretches are compositionally biased toward basic and acidic residues: residues 20–29, 104–116, and 127–141; these read RTKELLERQR, RTWEGPKTPEFRS, and PRPRRAKELLEDLRS. The segment at 100-253 is important for kinetochore and microtubule localization; sequence QNRQRTWEGP…TTSKRKLDFK (154 aa). Polar residues predominate over residues 144–155; sequence QGTPATKIPSQR. The SXIP motif 1 signature appears at 149 to 152; the sequence is TKIP. The segment covering 156–165 has biased composition (basic and acidic residues); that stretch reads NPKENQELSK. The segment covering 166-175 has biased composition (polar residues); the sequence is SHTCIPSSEP. The short motif at 168-171 is the SXIP motif 2 element; the sequence is TCIP. Positions 237 to 372 are CH (calponin-homology)-like region, which is not required for kinetochore and microtubule localization; it reads SDKGIKLTTS…MCALPVVSEK (136 aa). Positions 386–457 form a coiled coil; it reads YDVMSLQQKF…LQLQRLRLQE (72 aa).

As to quaternary structure, interacts with Eb1 via the two SxIP motifs; the interaction is not required for kebab kinetochore localization.

The protein resides in the cytoplasm. It is found in the perinuclear region. Its subcellular location is the chromosome. It localises to the centromere. The protein localises to the kinetochore. The protein resides in the cytoskeleton. It is found in the spindle. The chain is Kinetochore and Eb1-associated basic protein from Drosophila melanogaster (Fruit fly).